The following is an 855-amino-acid chain: Valine--tRNA ligase (855 aa).

Positions 44 to 54 (PNVTGVLHIGH) match the 'HIGH' region motif. Residues 524-528 (KMSKT) carry the 'KMSKS' region motif. ATP is bound at residue lysine 527. The stretch at 797–827 (KVEEDPARKQKEREQLEKNIANSKRQLGDEV) forms a coiled coil.

Belongs to the class-I aminoacyl-tRNA synthetase family. ValS type 1 subfamily. As to quaternary structure, monomer.

It is found in the cytoplasm. It catalyses the reaction tRNA(Val) + L-valine + ATP = L-valyl-tRNA(Val) + AMP + diphosphate. Its function is as follows. Catalyzes the attachment of valine to tRNA(Val). As ValRS can inadvertently accommodate and process structurally similar amino acids such as threonine, to avoid such errors, it has a 'posttransfer' editing activity that hydrolyzes mischarged Thr-tRNA(Val) in a tRNA-dependent manner. This Solibacter usitatus (strain Ellin6076) protein is Valine--tRNA ligase.